Reading from the N-terminus, the 184-residue chain is TRAF-interacting protein with FHA domain-containing protein A (184 aa).

T9 is subject to Phosphothreonine; by ALPK1. The region spanning 47 to 103 (VKFGRNSNICHYTFQDKQVSRVQFSLQLFKKFNSSVLSFEIKNMSKKTNLIVDSREL) is the FHA domain. A disordered region spans residues 165–184 (TYSLCSSQSSSPTEMDENES). A compositionally biased stretch (polar residues) spans 167–177 (SLCSSQSSSPT).

The protein belongs to the TIFA family. As to quaternary structure, homooligomer; homooligomerizes following phosphorylation at Thr-9. Interacts with IRAK1, TRAF2 and TRAF6. Interacts with TIFAB; binding to TIFAB inhibits TRAF6 activation, possibly by inducing a conformational change in TIFA. Interacts with ZCCHC11; binding to ZCCHC11 suppresses the TRAF6-dependent activation of NF-kappa-B. Phosphorylated at Thr-9 following detection of ADP-D-glycero-beta-D-manno-heptose (ADP-Heptose) by ALPK1. Phosphorylation at Thr-9 by ALPK1 leads to the formation of an intermolecular binding between the FHA domain and phosphorylated Thr-9, promoting TIFA oligomerization and TIFA-mediated NF-kappa-B activation.

The protein localises to the cytoplasm. Its function is as follows. Adapter molecule that plays a key role in the activation of pro-inflammatory NF-kappa-B signaling following detection of bacterial pathogen-associated molecular pattern metabolites (PAMPs). Promotes activation of an innate immune response by inducing the oligomerization and polyubiquitination of TRAF6, which leads to the activation of TAK1 and IKK through a proteasome-independent mechanism. TIFA-dependent innate immune response is triggered by ADP-D-glycero-beta-D-manno-heptose (ADP-Heptose), a potent PAMP present in all Gram-negative and some Gram-positive bacteria: ADP-Heptose is recognized by ALPK1, which phosphorylates TIFA at Thr-9, leading to TIFA homooligomerization and subsequent activation of pro-inflammatory NF-kappa-B signaling. The polypeptide is TRAF-interacting protein with FHA domain-containing protein A (Homo sapiens (Human)).